Here is a 320-residue protein sequence, read N- to C-terminus: Cytochrome f (320 aa).

An N-terminal signal peptide occupies residues 1–35 (MQNRKTFSWVKEQMTRSIYVSIMIYVITRASISNA). Heme contacts are provided by Tyr36, Cys56, Cys59, and His60. A helical transmembrane segment spans residues 286–306 (VQGLLFFLASVILAQIFLVLK).

Belongs to the cytochrome f family. In terms of assembly, the 4 large subunits of the cytochrome b6-f complex are cytochrome b6, subunit IV (17 kDa polypeptide, petD), cytochrome f and the Rieske protein, while the 4 small subunits are PetG, PetL, PetM and PetN. The complex functions as a dimer. It depends on heme as a cofactor.

The protein localises to the plastid. It localises to the chloroplast thylakoid membrane. Its function is as follows. Component of the cytochrome b6-f complex, which mediates electron transfer between photosystem II (PSII) and photosystem I (PSI), cyclic electron flow around PSI, and state transitions. In Phalaenopsis aphrodite subsp. formosana (Moth orchid), this protein is Cytochrome f.